An 88-amino-acid polypeptide reads, in one-letter code: MSKIRGNRKTRVGVVISDKMDKTVVVKVDQMVKHPIYKKYIKRRVTFKAHDEENRCNVGDKVSVVETRPLSRDKRWRVREILEKNVIL.

This sequence belongs to the universal ribosomal protein uS17 family. Part of the 30S ribosomal subunit.

Its function is as follows. One of the primary rRNA binding proteins, it binds specifically to the 5'-end of 16S ribosomal RNA. This is Small ribosomal subunit protein uS17 from Syntrophotalea carbinolica (strain DSM 2380 / NBRC 103641 / GraBd1) (Pelobacter carbinolicus).